Consider the following 363-residue polypeptide: 3-methyl-D-ornithine--L-lysine ligase (363 aa).

K10 serves as a coordination point for ATP. Residue 11–12 (LQ) participates in L-lysine binding. Residues D31, 49-50 (DV), and 72-73 (EN) each bind ATP. Residue E72 participates in L-lysine binding. Residues 85–269 (EEFSCPVLFD…LIELLFRAFG (185 aa)) enclose the ATP-grasp domain. ADP-binding positions include K104, K131, S138, and 160–163 (EEYV). D-ornithine contacts are provided by residues 169-171 (SLE) and D225. Residues E227, E239, and D241 each contribute to the Mg(2+) site. Position 239 (E239) interacts with ADP. Residues 243-248 (RFPSQT) and E302 contribute to the D-ornithine site. L-lysine is bound by residues S246 and E302.

The protein belongs to the PylC family. Requires Mg(2+) as cofactor.

The catalysed reaction is (3R)-3-methyl-D-ornithine + L-lysine + ATP = (3R)-3-methyl-D-ornithyl-N(6)-L-lysine + ADP + phosphate + H(+). It participates in amino-acid biosynthesis; L-pyrrolysine biosynthesis. In terms of biological role, is required for the biosynthesis of pyrrolysine. Catalyzes the ATP-dependent ligation between (3R)-3-methyl-D-ornithine and L-lysine, leading to (3R)-3-methyl-D-ornithyl-N6-L-lysine. The polypeptide is 3-methyl-D-ornithine--L-lysine ligase (Methanosarcina acetivorans (strain ATCC 35395 / DSM 2834 / JCM 12185 / C2A)).